The primary structure comprises 252 residues: Urease accessory protein UreH (252 aa).

It belongs to the UreD family. As to quaternary structure, ureH, UreF and UreG form a complex that acts as a GTP-hydrolysis-dependent molecular chaperone, activating the urease apoprotein by helping to assemble the nickel containing metallocenter of UreC. The UreE protein probably delivers the nickel.

The protein resides in the cytoplasm. Required for maturation of urease via the functional incorporation of the urease nickel metallocenter. The polypeptide is Urease accessory protein UreH (Helicobacter hepaticus (strain ATCC 51449 / 3B1)).